A 421-amino-acid polypeptide reads, in one-letter code: Subtilisin-like protease 2 (421 aa).

The signal sequence occupies residues 1 to 16 (MQLLNFGLLLLPFVAG). A propeptide spanning residues 17–122 (DLAPQPEPLL…VHPDQHFYLA (106 aa)) is cleaved from the precursor. The Inhibitor I9 domain maps to 36–121 (QYLVTLKEGL…SVHPDQHFYL (86 aa)). The Peptidase S8 domain occupies 131–421 (RWGLGYMSSK…ERKCKLPKYY (291 aa)). The Charge relay system role is filled by Asp169. N-linked (GlcNAc...) asparagine glycosylation is present at Asn192. His201 serves as the catalytic Charge relay system. Asn248, Asn261, and Asn348 each carry an N-linked (GlcNAc...) asparagine glycan. Ser357 (charge relay system) is an active-site residue. Asn388 is a glycosylation site (N-linked (GlcNAc...) asparagine).

It belongs to the peptidase S8 family.

It is found in the secreted. Secreted subtilisin-like serine protease with keratinolytic activity that contributes to pathogenicity. In Trichophyton rubrum (Athlete's foot fungus), this protein is Subtilisin-like protease 2 (SUB2).